Here is a 445-residue protein sequence, read N- to C-terminus: Glutamate-1-semialdehyde 2,1-aminomutase (445 aa).

N6-(pyridoxal phosphate)lysine is present on lysine 264.

This sequence belongs to the class-III pyridoxal-phosphate-dependent aminotransferase family. HemL subfamily. Pyridoxal 5'-phosphate is required as a cofactor.

The protein localises to the cytoplasm. The enzyme catalyses (S)-4-amino-5-oxopentanoate = 5-aminolevulinate. It functions in the pathway porphyrin-containing compound metabolism; protoporphyrin-IX biosynthesis; 5-aminolevulinate from L-glutamyl-tRNA(Glu): step 2/2. This chain is Glutamate-1-semialdehyde 2,1-aminomutase, found in Halobacterium salinarum (strain ATCC 29341 / DSM 671 / R1).